The sequence spans 320 residues: Malate dehydrogenase (320 aa).

Residues 10–15 and D34 contribute to the NAD(+) site; that span reads GSGMIG. Positions 83 and 89 each coordinate substrate. NAD(+) contacts are provided by residues N96 and 119–121; that span reads ITN. Residues N121 and R152 each coordinate substrate. The active-site Proton acceptor is H176.

Belongs to the LDH/MDH superfamily. MDH type 3 family.

The catalysed reaction is (S)-malate + NAD(+) = oxaloacetate + NADH + H(+). Functionally, catalyzes the reversible oxidation of malate to oxaloacetate. The polypeptide is Malate dehydrogenase (Brucella abortus (strain S19)).